Here is a 545-residue protein sequence, read N- to C-terminus: MAELTISSDEIRSAIANYTSSYSPEASREEVGVVTAAADGIAQVSGMPSVMANELLEFPGGVIGVAQNLDTDSVGVVILGNFETLKEGDEVKRTGEVLSIPVGEKFLGRVINPLGQAIDGLGDIESEEERALELQAPSVLMRQPVEEPMQTGIKAIDAMTPIGRGQRQLIIGDRKTGKTSVCIDTILNQRDNWATGDPKQQVRCIYVAVGQKGSTIASIRKTLEDHGALEYTTIVAAPASDSAGFKWLAPFTGAALGQHWMYQGKHVLVIYDDLTKQAEAYRAISLLLRRPPGREAYPGDVFYLHSRLLERAAKLNDELGGGSLTALPIIETKANDVSAFIPTNVISITDGQVFLESDLFNQGVRPAINVGVSVSRVGGAAQTKGMKKVSGSLRLDLAAYRDLEAFAAFASDLDPASKAQLERGKRLVELLKQKETEPQSVEDQMVSIYLAGEGEFDDVPVEDVRRFESELLENLHATHGGVFEQIKGGTPFSDESKAELAGAVQDFKQGFQTTDGTPVINEPEARPLGDDEVTKSQITVSRKTQ.

An ATP-binding site is contributed by Gly172 to Thr179. The tract at residues Phe511–Gln545 is disordered. Residues Pro523 to Thr534 are compositionally biased toward basic and acidic residues. The span at Lys535–Gln545 shows a compositional bias: polar residues.

It belongs to the ATPase alpha/beta chains family. As to quaternary structure, F-type ATPases have 2 components, CF(1) - the catalytic core - and CF(0) - the membrane proton channel. CF(1) has five subunits: alpha(3), beta(3), gamma(1), delta(1), epsilon(1). CF(0) has three main subunits: a(1), b(2) and c(9-12). The alpha and beta chains form an alternating ring which encloses part of the gamma chain. CF(1) is attached to CF(0) by a central stalk formed by the gamma and epsilon chains, while a peripheral stalk is formed by the delta and b chains.

It is found in the cell membrane. It catalyses the reaction ATP + H2O + 4 H(+)(in) = ADP + phosphate + 5 H(+)(out). In terms of biological role, produces ATP from ADP in the presence of a proton gradient across the membrane. The alpha chain is a regulatory subunit. The polypeptide is ATP synthase subunit alpha (Corynebacterium jeikeium (strain K411)).